A 68-amino-acid chain; its full sequence is MLGDISKPHHTWSPSCVKISPDSPDPHPISRMKLHGCRFKSSNALSVIFAWICCTLVEPVYLCASLSL.

This is an uncharacterized protein from Saccharomyces cerevisiae (strain ATCC 204508 / S288c) (Baker's yeast).